Consider the following 154-residue polypeptide: Crossover junction endodeoxyribonuclease RuvC (154 aa).

Active-site residues include Asp-7, Glu-67, and Asp-139. Mg(2+) contacts are provided by Asp-7, Glu-67, and Asp-139.

This sequence belongs to the RuvC family. Homodimer which binds Holliday junction (HJ) DNA. The HJ becomes 2-fold symmetrical on binding to RuvC with unstacked arms; it has a different conformation from HJ DNA in complex with RuvA. In the full resolvosome a probable DNA-RuvA(4)-RuvB(12)-RuvC(2) complex forms which resolves the HJ. The cofactor is Mg(2+).

Its subcellular location is the cytoplasm. It carries out the reaction Endonucleolytic cleavage at a junction such as a reciprocal single-stranded crossover between two homologous DNA duplexes (Holliday junction).. Its function is as follows. The RuvA-RuvB-RuvC complex processes Holliday junction (HJ) DNA during genetic recombination and DNA repair. Endonuclease that resolves HJ intermediates. Cleaves cruciform DNA by making single-stranded nicks across the HJ at symmetrical positions within the homologous arms, yielding a 5'-phosphate and a 3'-hydroxyl group; requires a central core of homology in the junction. The consensus cleavage sequence is 5'-(A/T)TT(C/G)-3'. Cleavage occurs on the 3'-side of the TT dinucleotide at the point of strand exchange. HJ branch migration catalyzed by RuvA-RuvB allows RuvC to scan DNA until it finds its consensus sequence, where it cleaves and resolves the cruciform DNA. The polypeptide is Crossover junction endodeoxyribonuclease RuvC (Prochlorococcus marinus (strain NATL1A)).